The following is a 250-amino-acid chain: MASLRIEVISLFPEMFSAISEYGITSRAVKQGLLQLTCWNPRDYTTDRHHTVDDRPFGGGPGMVMKIKPLEDALVQARQAAGDAAKVIYLSPQGRQLNQSAVRELAQEEAIILIAGRYEGIDERFIDAHVDEEWSIGDYVLSGGELPAMVLIDAVTRLLPGALGHVDSAEEDSFTDGLLDCPHYTRPEVYADQRVPDVLLSGNHAHIRRWRLQQSLGRTYERRADLLESRSLSGEEKKLLAEYIRERDDS.

S-adenosyl-L-methionine-binding positions include glycine 116 and 136-141 (IGDYVL).

Belongs to the RNA methyltransferase TrmD family. Homodimer.

The protein resides in the cytoplasm. The enzyme catalyses guanosine(37) in tRNA + S-adenosyl-L-methionine = N(1)-methylguanosine(37) in tRNA + S-adenosyl-L-homocysteine + H(+). Functionally, specifically methylates guanosine-37 in various tRNAs. This is tRNA (guanine-N(1)-)-methyltransferase from Pseudomonas savastanoi pv. phaseolicola (strain 1448A / Race 6) (Pseudomonas syringae pv. phaseolicola (strain 1448A / Race 6)).